A 196-amino-acid polypeptide reads, in one-letter code: MIIKSSNYAVSAVREDQYPKDNLPEIALSGRSNVGKSSLINTLLNRKNLARTSSQPGKTQTLNFYLINDEFYLVDVPGYGYARVSQKKRQEFGEMIQDYLETRPNLKGLVILIDSRHEPTKDDIAMYNYAQYLNLPILVVCTKIDKIKKSQVNKVMSRLKKNIDLNYDYVTVLTFSSVTKLHVAELGNWIEEKISK.

The region spanning 22–196 (NLPEIALSGR…GNWIEEKISK (175 aa)) is the EngB-type G domain. GTP-binding positions include 30–37 (GRSNVGKS), 57–61 (GKTQT), 75–78 (DVPG), 142–145 (TKID), and 175–177 (FSS). Mg(2+) contacts are provided by Ser37 and Thr59.

The protein belongs to the TRAFAC class TrmE-Era-EngA-EngB-Septin-like GTPase superfamily. EngB GTPase family. Mg(2+) is required as a cofactor.

In terms of biological role, necessary for normal cell division and for the maintenance of normal septation. The polypeptide is Probable GTP-binding protein EngB (Lactobacillus helveticus (strain DPC 4571)).